We begin with the raw amino-acid sequence, 261 residues long: Ribosome biogenesis protein nsa2 (261 aa).

Composition is skewed to basic and acidic residues over residues 1 to 36 and 66 to 82; these read MPQN…HKQS and KQHE…EKDP. Disordered regions lie at residues 1–44 and 64–97; these read MPQN…NLRG and AIKQ…SNPT. The Nuclear localization signal motif lies at 15–22; sequence GKRLDTEE.

The protein belongs to the eukaryotic ribosomal protein eS8 family. Ribosome biogenesis protein NSA2 subfamily. As to quaternary structure, component of the pre-66S ribosomal particle. Interacts with nop7 and rrp1. Interacts with rsa4 (via WD repeats).

It localises to the nucleus. Its subcellular location is the nucleolus. Functionally, involved in the biogenesis of the 60S ribosomal subunit. May play a part in the quality control of pre-60S particles. This is Ribosome biogenesis protein nsa2 (rbg-52) from Neurospora crassa (strain ATCC 24698 / 74-OR23-1A / CBS 708.71 / DSM 1257 / FGSC 987).